The primary structure comprises 95 residues: Small ribosomal subunit protein bS20 (95 aa).

The protein belongs to the bacterial ribosomal protein bS20 family.

In terms of biological role, binds directly to 16S ribosomal RNA. The chain is Small ribosomal subunit protein bS20 from Fervidobacterium nodosum (strain ATCC 35602 / DSM 5306 / Rt17-B1).